The following is a 529-amino-acid chain: Calcium/calmodulin-dependent protein kinase type II subunit gamma (529 aa).

The region spanning 14–272 is the Protein kinase domain; that stretch reads YQLFEELGKG…ADQALKHPWV (259 aa). ATP is bound by residues 20-28 and lysine 43; that span reads LGKGAFSVV. Catalysis depends on aspartate 136, which acts as the Proton acceptor. An autoinhibitory domain region spans residues 283-292; it reads HRQETVECLR. Phosphothreonine; by autocatalysis occurs at positions 287, 306, and 307. The tract at residues 294–316 is calmodulin-binding; the sequence is FNARRKLKGAILTTMLVSRNFSA. Phosphoserine is present on residues serine 311, serine 334, serine 349, serine 352, and serine 455. A disordered region spans residues 324–353; it reads KSDGGVKKRKSSSSVHLMPQSNNKNSLVSP. The segment covering 342 to 352 has biased composition (polar residues); sequence PQSNNKNSLVS.

Belongs to the protein kinase superfamily. CAMK Ser/Thr protein kinase family. CaMK subfamily. In terms of assembly, CAMK2 is composed of 4 different chains: alpha (CAMK2A), beta (CAMK2B), gamma (CAMK2G), and delta (CAMK2D). The different isoforms assemble into homo- or heteromultimeric holoenzymes composed of 12 subunits with two hexameric rings stacked one on top of the other. Post-translationally, autophosphorylation of Thr-287 following activation by Ca(2+)/calmodulin. Phosphorylation of Thr-287 locks the kinase into an activated state.

Its subcellular location is the sarcoplasmic reticulum membrane. It catalyses the reaction L-seryl-[protein] + ATP = O-phospho-L-seryl-[protein] + ADP + H(+). It carries out the reaction L-threonyl-[protein] + ATP = O-phospho-L-threonyl-[protein] + ADP + H(+). Activated by Ca(2+)/calmodulin. Binding of calmodulin results in conformational change that relieves intrasteric autoinhibition and allows autophosphorylation of Thr-287 which turns the kinase in a constitutively active form and confers to the kinase a Ca(2+)-independent activity. In terms of biological role, calcium/calmodulin-dependent protein kinase that functions autonomously after Ca(2+)/calmodulin-binding and autophosphorylation, and is involved in sarcoplasmic reticulum Ca(2+) transport in skeletal muscle and may function in dendritic spine and synapse formation and neuronal plasticity. In slow-twitch muscles, is involved in regulation of sarcoplasmic reticulum (SR) Ca(2+) transport and in fast-twitch muscle participates in the control of Ca(2+) release from the SR through phosphorylation of the ryanodine receptor-coupling factor triadin. In the central nervous system, it is involved in the regulation of neurite formation and arborization. It may participate in the promotion of dendritic spine and synapse formation and maintenance of synaptic plasticity which enables long-term potentiation (LTP) and hippocampus-dependent learning. In response to interferon-gamma (IFN-gamma) stimulation, catalyzes phosphorylation of STAT1, stimulating the JAK-STAT signaling pathway. The chain is Calcium/calmodulin-dependent protein kinase type II subunit gamma (Camk2g) from Mus musculus (Mouse).